The following is a 72-amino-acid chain: Translation initiation factor IF-1 (72 aa).

The 72-residue stretch at 1–72 folds into the S1-like domain; sequence MAKADVIEVE…TKGRITFRFK (72 aa).

This sequence belongs to the IF-1 family. As to quaternary structure, component of the 30S ribosomal translation pre-initiation complex which assembles on the 30S ribosome in the order IF-2 and IF-3, IF-1 and N-formylmethionyl-tRNA(fMet); mRNA recruitment can occur at any time during PIC assembly.

Its subcellular location is the cytoplasm. Its function is as follows. One of the essential components for the initiation of protein synthesis. Stabilizes the binding of IF-2 and IF-3 on the 30S subunit to which N-formylmethionyl-tRNA(fMet) subsequently binds. Helps modulate mRNA selection, yielding the 30S pre-initiation complex (PIC). Upon addition of the 50S ribosomal subunit IF-1, IF-2 and IF-3 are released leaving the mature 70S translation initiation complex. The polypeptide is Translation initiation factor IF-1 (Limosilactobacillus reuteri (strain DSM 20016) (Lactobacillus reuteri)).